The sequence spans 49 residues: DNA-directed RNA polymerase subunit Rpo12 (49 aa).

Positions 11, 27, and 30 each coordinate Zn(2+).

The protein belongs to the archaeal Rpo12/eukaryotic RPC10 RNA polymerase subunit family. As to quaternary structure, part of the RNA polymerase complex. Zn(2+) is required as a cofactor.

The protein localises to the cytoplasm. It carries out the reaction RNA(n) + a ribonucleoside 5'-triphosphate = RNA(n+1) + diphosphate. Its function is as follows. DNA-dependent RNA polymerase (RNAP) catalyzes the transcription of DNA into RNA using the four ribonucleoside triphosphates as substrates. The protein is DNA-directed RNA polymerase subunit Rpo12 of Pyrococcus abyssi (strain GE5 / Orsay).